Reading from the N-terminus, the 417-residue chain is 3-ketoacyl-CoA thiolase, peroxisomal (417 aa).

Residues 1 to 15 (MSQRLQSIKDHLVES) constitute a peroxisome transit peptide. The tract at residues 1–15 (MSQRLQSIKDHLVES) is PTS2-type peroxisomal targeting signal. Cys125 acts as the Acyl-thioester intermediate in catalysis. Catalysis depends on proton acceptor residues His375 and Cys403.

The protein belongs to the thiolase-like superfamily. Thiolase family. Homodimer. Interacts (via PTS2-type peroxisomal targeting signal region) with PEX7; leading to its translocation into peroxisomes.

Its subcellular location is the peroxisome. The protein localises to the mitochondrion intermembrane space. The catalysed reaction is an acyl-CoA + acetyl-CoA = a 3-oxoacyl-CoA + CoA. Its pathway is lipid metabolism; fatty acid metabolism. In terms of biological role, responsible for the thiolytic cleavage of straight chain 3-keto fatty acyl-CoAs (3-oxoacyl-CoAs). This is 3-ketoacyl-CoA thiolase, peroxisomal (POT1) from Saccharomyces cerevisiae (strain ATCC 204508 / S288c) (Baker's yeast).